The chain runs to 295 residues: Spermatogenesis-associated protein 4 (295 aa).

The segment at 1 to 34 (MAAAGQAEECLPLPAAESSKTSLPTPPAVPAGKK) is disordered. The Calponin-homology (CH) domain occupies 48-154 (SRLSRSVLRW…QEIYTLLTHQ (107 aa)). Positions 251–295 (KRRYKSRGSKEKAAQPLSKSDNDGNARKEIHVKQSGNPCENTENL) are disordered. Residues 270 to 282 (SDNDGNARKEIHV) show a composition bias toward basic and acidic residues. The span at 284–295 (QSGNPCENTENL) shows a compositional bias: polar residues.

Testis.

Its subcellular location is the nucleus. May play a role in apoptosis regulation. The chain is Spermatogenesis-associated protein 4 (Spata4) from Mus musculus (Mouse).